The following is a 358-amino-acid chain: Trace amine-associated receptor 7d (358 aa).

At 1–47 (MRVDDDRFPWDQDSILSRDLLSASSLQLCYENLNRSCVRSPYSPGPR) the chain is on the extracellular side. Asn34 carries an N-linked (GlcNAc...) asparagine glycan. 2 disulfide bridges follow: Cys37-Cys201 and Cys120-Cys205. A helical transmembrane segment spans residues 48–68 (LILYAVFGFGAVLAVCGNLMV). Residues 69–83 (MTSILHFRQLHSPAN) are Cytoplasmic-facing. A helical transmembrane segment spans residues 84-104 (FLVASLACADFLVGLTVMPFS). The Extracellular segment spans residues 105 to 122 (MVRSVEGCWYFGDTYCKL). The chain crosses the membrane as a helical span at residues 123 to 143 (HTCFDVSFCYCSLFHLCFISV). Topologically, residues 144–166 (DRYIAVSDPLIYPTRFTASVSGK) are cytoplasmic. A helical transmembrane segment spans residues 167–187 (CITFSWLLSIIYGFPLIYTGA). The Extracellular portion of the chain corresponds to 188–212 (SEAGLEDLVSALTCVGGCQIPMNQK). A helical transmembrane segment spans residues 213-233 (FVLINFLLFLVPTLVMMTVYS). Residues 234 to 274 (KIFLIARQQAQNIEKMRKQTARASESYKDRVCKRERKAAKT) are Cytoplasmic-facing. Residues 275 to 295 (LGIAVAAFLLSWLPYFIDSII) form a helical membrane-spanning segment. Over 296-309 (DAFLGFITPTYVYE) the chain is Extracellular. The chain crosses the membrane as a helical span at residues 310–333 (ILIWIVYYNSSMNPLIYAFFYPWF). At 334-358 (RKATKLIVTGKILRENSSTINLFPE) the chain is on the cytoplasmic side.

Belongs to the G-protein coupled receptor 1 family.

The protein resides in the cell membrane. Olfactory receptor specific for N,N-dimethylalkylamines trace amines, such as N,N-dimethylcyclohexylamine. Trace amine compounds are enriched in animal body fluids and act on trace amine-associated receptors (TAARs) to elicit both intraspecific and interspecific innate behaviors. Ligand-binding causes a conformation change that triggers signaling via G(s)-class of G alpha proteins (GNAL or GNAS). The polypeptide is Trace amine-associated receptor 7d (Rattus norvegicus (Rat)).